A 751-amino-acid chain; its full sequence is Glutamate carboxypeptidase 2 (751 aa).

Residues 1–19 lie on the Cytoplasmic side of the membrane; the sequence is MWNPLHETDSTSVAWRRPR. The residue at position 10 (S10) is a Phosphoserine. A helical; Signal-anchor for type II membrane protein transmembrane segment spans residues 20–43; the sequence is WLCAGALVLAAGLFVLGFLFGWFI. Residues 44 to 750 are Extracellular-facing; the sequence is KSPNEAANIS…QAAAGTLREV (707 aa). 6 N-linked (GlcNAc...) asparagine glycosylation sites follow: N51, N77, N122, N141, N154, and N196. Substrate contacts are provided by R211 and N258. Residues T270 and Y273 each coordinate Ca(2+). The NAALADase stretch occupies residues 275-588; sequence ANEYAYRLQI…QVRGGIVFEL (314 aa). The N-linked (GlcNAc...) asparagine glycan is linked to N337. H378 and D388 together coordinate Zn(2+). E425 contributes to the substrate binding site. Catalysis depends on E425, which acts as the Nucleophile; for NAALADase activity. E426 is a binding site for Zn(2+). Residues E434 and E437 each coordinate Ca(2+). D454 lines the Zn(2+) pocket. N-linked (GlcNAc...) asparagine glycans are attached at residues N460 and N477. Substrate contacts are provided by residues 518–519, N520, 535–537, Y553, and 553–554; these read SG, RAR, and YH. H554 provides a ligand contact to Zn(2+). A glycan (N-linked (GlcNAc...) asparagine) is linked at N614. S629 functions as the Charge relay system in the catalytic mechanism. 2 N-linked (GlcNAc...) asparagine glycosylation sites follow: N639 and N646. Residues D667 and H690 each act as charge relay system in the active site. 700-701 contacts substrate; the sequence is KY.

It belongs to the peptidase M28 family. M28B subfamily. As to quaternary structure, homodimer. Zn(2+) serves as cofactor. In terms of tissue distribution, high expression in the duodenum and in the jejunum brush-border membrane. Weak expression in kidney.

The protein localises to the cell membrane. The enzyme catalyses Release of an unsubstituted, C-terminal glutamyl residue, typically from Ac-Asp-Glu or folylpoly-gamma-glutamates.. With respect to regulation, the NAALADase activity is inhibited by quisqualic acid, beta-NAAG and 2-(phosphonomethyl) pentanedioic acid (PMPA). Ethanol ingestion decreases the folate hydrolase activity by 50%. Has both folate hydrolase and N-acetylated-alpha-linked-acidic dipeptidase (NAALADase) activity. Has a preference for tri-alpha-glutamate peptides. In the intestine, required for the uptake of folate. In the brain, modulates excitatory neurotransmission through the hydrolysis of the neuropeptide, N-aceylaspartylglutamate (NAAG), thereby releasing glutamate. In terms of biological role, also exhibits a dipeptidyl-peptidase IV type activity. In vitro, cleaves Gly-Pro-AMC. This chain is Glutamate carboxypeptidase 2 (FOLH1), found in Sus scrofa (Pig).